Reading from the N-terminus, the 187-residue chain is Cell division protein SepF (187 aa).

The protein belongs to the SepF family. Homodimer. Interacts with FtsZ.

The protein resides in the cytoplasm. Functionally, cell division protein that is part of the divisome complex and is recruited early to the Z-ring. Probably stimulates Z-ring formation, perhaps through the cross-linking of FtsZ protofilaments. Its function overlaps with FtsA. This is Cell division protein SepF from Streptococcus suis (strain 98HAH33).